The primary structure comprises 559 residues: PHD finger protein 1 (559 aa).

Residues 29–86 (PRLWEGQDVLARWTDGLLYLGTIKKVDSAREVCLVQFEDDSQFLVLWKDISPAALPGE) form the Tudor domain. PHD-type zinc fingers lie at residues 87-142 (ELLC…CVFA) and 186-240 (QSYC…CRGG). Disordered stretches follow at residues 338 to 434 (PVEL…TDAR) and 448 to 526 (HPSA…GGVS). Residues 369–386 (WRSEPEPLRRRQKGKVEE) are compositionally biased toward basic and acidic residues. Composition is skewed to polar residues over residues 417–426 (NQSYEGSSGY) and 449–459 (PSASTAGTSGD). Residues 481-515 (SSPHSVTASSSSVPALTPGFSRHSPPSPLCRSLSP) are compositionally biased toward low complexity.

Belongs to the Polycomblike family. Associated component of the PRC2 complex. Interacts with p53/TP53. Interacts with CHMP1. In terms of tissue distribution, testis-specific.

The protein resides in the nucleus. The protein localises to the cytoplasm. It localises to the cytoskeleton. It is found in the microtubule organizing center. Its subcellular location is the centrosome. Functionally, polycomb group (PcG) that specifically binds histone H3 trimethylated at 'Lys-36' (H3K36me3) and recruits the PRC2 complex. Involved in DNA damage response and is recruited at double-strand breaks (DSBs). Acts by binding to H3K36me3, a mark for transcriptional activation, and recruiting the PRC2 complex: it is however unclear whether recruitment of the PRC2 complex to H3K36me3 leads to enhance or inhibit H3K27me3 methylation mediated by the PRC2 complex. According to some reports, PRC2 recruitment by PHF1 promotes H3K27me3 and subsequent gene silencing by inducing spreading of PRC2 and H3K27me3 into H3K36me3 loci. According to other reports, PHF1 recruits the PRC2 complex at double-strand breaks (DSBs) and inhibits the activity of PRC2. Regulates p53/TP53 stability and prolonges its turnover: may act by specifically binding to a methylated from of p53/TP53. The protein is PHD finger protein 1 (Phf1) of Mus musculus (Mouse).